Here is a 74-residue protein sequence, read N- to C-terminus: Protein krueppel (74 aa).

4 C2H2-type zinc fingers span residues 1 to 4 (ERTH), 10 to 32 (FECP…MRLH), 38 to 60 (YHCS…LRVH), and 66 to 74 (YTCEICDGK).

This sequence belongs to the krueppel C2H2-type zinc-finger protein family.

It localises to the nucleus. In terms of biological role, krueppel is a gap class segmentation protein. The sequence is that of Protein krueppel (Kr) from Musca domestica (House fly).